A 306-amino-acid polypeptide reads, in one-letter code: Mycothiol acetyltransferase (306 aa).

N-acetyltransferase domains lie at 5-162 and 155-306; these read VWAE…TFVP and VRLR…AQGS. Acetyl-CoA-binding positions include 82–84 and 90–95; these read LIV and RRGHGT. 1D-myo-inositol 2-(L-cysteinylamino)-2-deoxy-alpha-D-glucopyranoside contacts are provided by Glu-182, Lys-222, and Glu-238. Acetyl-CoA-binding positions include 242–244 and 249–255; these read VGV and QGGGLGK. Tyr-276 provides a ligand contact to 1D-myo-inositol 2-(L-cysteinylamino)-2-deoxy-alpha-D-glucopyranoside.

Belongs to the acetyltransferase family. MshD subfamily. Monomer.

The catalysed reaction is 1D-myo-inositol 2-(L-cysteinylamino)-2-deoxy-alpha-D-glucopyranoside + acetyl-CoA = mycothiol + CoA + H(+). In terms of biological role, catalyzes the transfer of acetyl from acetyl-CoA to desacetylmycothiol (Cys-GlcN-Ins) to form mycothiol. In Saccharomonospora viridis (strain ATCC 15386 / DSM 43017 / JCM 3036 / CCUG 5913 / NBRC 12207 / NCIMB 9602 / P101) (Thermoactinomyces viridis), this protein is Mycothiol acetyltransferase.